Here is a 79-residue protein sequence, read N- to C-terminus: Probable [Fe-S]-dependent transcriptional repressor (79 aa).

Iron-sulfur cluster contacts are provided by cysteine 56, cysteine 61, cysteine 64, and cysteine 71.

The protein belongs to the FeoC family.

Its function is as follows. May function as a transcriptional regulator that controls feoABC expression. In Klebsiella pneumoniae subsp. pneumoniae (strain ATCC 700721 / MGH 78578), this protein is Probable [Fe-S]-dependent transcriptional repressor.